Here is a 303-residue protein sequence, read N- to C-terminus: 4-diphosphocytidyl-2-C-methyl-D-erythritol kinase (303 aa).

Lys-21 is a catalytic residue. 106–116 (PVAAGIGGGSA) contacts ATP. Asp-148 is an active-site residue.

Belongs to the GHMP kinase family. IspE subfamily.

It catalyses the reaction 4-CDP-2-C-methyl-D-erythritol + ATP = 4-CDP-2-C-methyl-D-erythritol 2-phosphate + ADP + H(+). The protein operates within isoprenoid biosynthesis; isopentenyl diphosphate biosynthesis via DXP pathway; isopentenyl diphosphate from 1-deoxy-D-xylulose 5-phosphate: step 3/6. Its function is as follows. Catalyzes the phosphorylation of the position 2 hydroxy group of 4-diphosphocytidyl-2C-methyl-D-erythritol. The protein is 4-diphosphocytidyl-2-C-methyl-D-erythritol kinase of Nitrobacter hamburgensis (strain DSM 10229 / NCIMB 13809 / X14).